The sequence spans 269 residues: Ribonuclease HII (269 aa).

An RNase H type-2 domain is found at 83 to 269 (YLIAGVDEVG…HRMSFLTNIL (187 aa)). Residues aspartate 89, glutamate 90, and aspartate 185 each coordinate a divalent metal cation.

The protein belongs to the RNase HII family. It depends on Mn(2+) as a cofactor. Mg(2+) is required as a cofactor.

It localises to the cytoplasm. It catalyses the reaction Endonucleolytic cleavage to 5'-phosphomonoester.. Endonuclease that specifically degrades the RNA of RNA-DNA hybrids. The chain is Ribonuclease HII from Clostridium botulinum (strain Hall / ATCC 3502 / NCTC 13319 / Type A).